A 202-amino-acid chain; its full sequence is Large ribosomal subunit protein uL4 (202 aa).

Polar residues predominate over residues 42–52; that stretch reads GTKAQKSRSQV. The interval 42 to 70 is disordered; the sequence is GTKAQKSRSQVSGTTKKSKKQKGGGARHG.

This sequence belongs to the universal ribosomal protein uL4 family. In terms of assembly, part of the 50S ribosomal subunit.

In terms of biological role, one of the primary rRNA binding proteins, this protein initially binds near the 5'-end of the 23S rRNA. It is important during the early stages of 50S assembly. It makes multiple contacts with different domains of the 23S rRNA in the assembled 50S subunit and ribosome. Forms part of the polypeptide exit tunnel. The sequence is that of Large ribosomal subunit protein uL4 from Xylella fastidiosa (strain Temecula1 / ATCC 700964).